We begin with the raw amino-acid sequence, 408 residues long: Snake venom 5'-nucleotidase (408 aa).

Residues H54 and H77 each coordinate Zn(2+). N-linked (GlcNAc...) asparagine glycans are attached at residues N167 and N181. 2 disulfide bridges follow: C187-C192 and C199-C221. R188 is a binding site for AMP. Residues N224, R229, and F252 each contribute to the AMP site. Residues C311 and C314 are joined by a disulfide bond. Residues F335 and D341 each contribute to the AMP site. 2 consecutive propeptides (removed in mature form) follow at residues D385 to L388 and D385 to L408.

The protein belongs to the 5'-nucleotidase family. As to quaternary structure, homodimer. In terms of processing, venom 5'-nucleotidases (or a part thereof) may be released into the venom via exosome-like vesicles. They may be attached via a GPI anchor to the membrane of these vesicles. Soluble forms of 5'-nucleotidase might be released by cleavage of the ectodomain in the exosome-like vesicles or venom gland cells. Expressed by the venom gland.

Its subcellular location is the membrane. It carries out the reaction a ribonucleoside 5'-phosphate + H2O = a ribonucleoside + phosphate. The catalysed reaction is AMP + H2O = adenosine + phosphate. It catalyses the reaction GMP + H2O = guanosine + phosphate. The enzyme catalyses ADP + H2O = AMP + phosphate + H(+). Is potently inhibited by metal ions Fe(3+), Cu(2+) and Zn(2+). Is enhanced by Mn(2+). Ca(2+) and Mg(2+) have no effect. Functionally, hydrolyzes nucleotides into nucleosides. Prefers AMP as the substrate but also cleaves GMP and ADP. Does not affect AMP, cAMP and cGMP. Inhibits ADP- and collagen-induced platelet aggregation. Snake venom 5'-nucleotidases are widely distributed among venomous snake taxa, but there is a lack of information about their biological activities. They have been shown to inhibit platelet aggregation. This effect may be due to the liberation of inhibitory AMP or adenosine by its action on ADP released upon initiation of aggregation. Venom 5'-nucleotidases are also known to synergistically act in vivo with other toxins like ADPases, phospholipases, and disintegrins to exert a more pronounced anti-coagulant effect. This Macrovipera lebetinus (Levantine viper) protein is Snake venom 5'-nucleotidase.